We begin with the raw amino-acid sequence, 152 residues long: Anaerobic nitrite reductase HBI (152 aa).

The 150-residue stretch at 2-151 (ALTEKQEALL…LVATIKAEMK (150 aa)) folds into the Globin domain. The Homodimerization motif lies at 35–39 (EAAPE). Residues Ser45, Lys59, His63, Arg93, and His98 each coordinate heme b. The Homodimerization motif lies at 105–117 (DPHFEVMKGALLG).

Belongs to the plant globin family. In terms of assembly, homodimer. Heme b is required as a cofactor. In terms of tissue distribution, root nodules.

It localises to the cytoplasm. Its subcellular location is the nucleus. The catalysed reaction is Fe(III)-heme b-[protein] + nitric oxide + H2O = Fe(II)-heme b-[protein] + nitrite + 2 H(+). Functionally, phytoglobin that reduces nitrite to nitric oxide (NO) under anoxic conditions (e.g. during flooding or in waterlogged soil) and upon root nodulation. Required for general plant development and during nodulation, especially for the onset of symbiosis. Monitors nitric oxide (NO) levels during early phase of the nitrogen-fixing symbiosis and buffers oxygen in functioning nodules. May not function as an oxygen storage or transport protein. Has an unusually high affinity for O(2) through a hexacoordinate heme iron because of a very low dissociation constant. The protein is Anaerobic nitrite reductase HBI of Casuarina glauca (Swamp oak).